Consider the following 400-residue polypeptide: 3-phenylpropionate/cinnamic acid dioxygenase ferredoxin--NAD(+) reductase component (400 aa).

Residue 5-36 (TIIIVGGGQAAAMAAASLRQQGFTGELHLFSD) participates in FAD binding. Residue 146–174 (SVVIVGAGTIGLELAASATQRGCKVTVIE) participates in NAD(+) binding.

It belongs to the bacterial ring-hydroxylating dioxygenase ferredoxin reductase family. In terms of assembly, this dioxygenase system consists of four proteins: the two subunits of the hydroxylase component (HcaE and HcaF), a ferredoxin (HcaC) and a ferredoxin reductase (HcaD). FAD serves as cofactor.

It carries out the reaction 2 reduced [2Fe-2S]-[ferredoxin] + NAD(+) + H(+) = 2 oxidized [2Fe-2S]-[ferredoxin] + NADH. It functions in the pathway aromatic compound metabolism; 3-phenylpropanoate degradation. Functionally, part of the multicomponent 3-phenylpropionate dioxygenase, that converts 3-phenylpropionic acid (PP) and cinnamic acid (CI) into 3-phenylpropionate-dihydrodiol (PP-dihydrodiol) and cinnamic acid-dihydrodiol (CI-dihydrodiol), respectively. This is 3-phenylpropionate/cinnamic acid dioxygenase ferredoxin--NAD(+) reductase component from Escherichia coli O17:K52:H18 (strain UMN026 / ExPEC).